Here is a 445-residue protein sequence, read N- to C-terminus: Argininosuccinate synthase (445 aa).

ATP is bound by residues 17 to 25 and A43; that span reads AFSGGLDTS. An L-citrulline-binding site is contributed by Y99. ATP is bound by residues G129 and T131. Residues T131, N135, and D136 each coordinate L-aspartate. N135 serves as a coordination point for L-citrulline. D136 serves as a coordination point for ATP. Residues R139 and S192 each coordinate L-citrulline. D194 is a binding site for ATP. L-citrulline contacts are provided by T201, E203, and E280.

The protein belongs to the argininosuccinate synthase family. Type 2 subfamily. Homotetramer.

It is found in the cytoplasm. The catalysed reaction is L-citrulline + L-aspartate + ATP = 2-(N(omega)-L-arginino)succinate + AMP + diphosphate + H(+). It functions in the pathway amino-acid biosynthesis; L-arginine biosynthesis; L-arginine from L-ornithine and carbamoyl phosphate: step 2/3. This Burkholderia cenocepacia (strain ATCC BAA-245 / DSM 16553 / LMG 16656 / NCTC 13227 / J2315 / CF5610) (Burkholderia cepacia (strain J2315)) protein is Argininosuccinate synthase.